Here is a 145-residue protein sequence, read N- to C-terminus: D-aminoacyl-tRNA deacylase (145 aa).

A Gly-cisPro motif, important for rejection of L-amino acids motif is present at residues 137 to 138; that stretch reads GP.

The protein belongs to the DTD family. In terms of assembly, homodimer.

The protein localises to the cytoplasm. It carries out the reaction glycyl-tRNA(Ala) + H2O = tRNA(Ala) + glycine + H(+). The catalysed reaction is a D-aminoacyl-tRNA + H2O = a tRNA + a D-alpha-amino acid + H(+). Functionally, an aminoacyl-tRNA editing enzyme that deacylates mischarged D-aminoacyl-tRNAs. Also deacylates mischarged glycyl-tRNA(Ala), protecting cells against glycine mischarging by AlaRS. Acts via tRNA-based rather than protein-based catalysis; rejects L-amino acids rather than detecting D-amino acids in the active site. By recycling D-aminoacyl-tRNA to D-amino acids and free tRNA molecules, this enzyme counteracts the toxicity associated with the formation of D-aminoacyl-tRNA entities in vivo and helps enforce protein L-homochirality. The chain is D-aminoacyl-tRNA deacylase from Salmonella paratyphi C (strain RKS4594).